A 159-amino-acid polypeptide reads, in one-letter code: Ribosomal RNA large subunit methyltransferase H (159 aa).

S-adenosyl-L-methionine contacts are provided by residues L76, G108, and 127 to 132 (FGKMTL).

This sequence belongs to the RNA methyltransferase RlmH family. Homodimer.

Its subcellular location is the cytoplasm. It catalyses the reaction pseudouridine(1915) in 23S rRNA + S-adenosyl-L-methionine = N(3)-methylpseudouridine(1915) in 23S rRNA + S-adenosyl-L-homocysteine + H(+). Functionally, specifically methylates the pseudouridine at position 1915 (m3Psi1915) in 23S rRNA. The polypeptide is Ribosomal RNA large subunit methyltransferase H (Lysinibacillus sphaericus (strain C3-41)).